Here is an 817-residue protein sequence, read N- to C-terminus: Alpha-bisabolene synthase (817 aa).

5 residues coordinate Mg(2+): aspartate 566, aspartate 570, aspartate 713, threonine 717, and glutamate 721. The short motif at 566-570 (DDMYD) is the DDXXD motif element.

It belongs to the terpene synthase family. Tpsd subfamily. It depends on Mg(2+) as a cofactor. The cofactor is Mn(2+). K(+) serves as cofactor.

The protein resides in the cytoplasm. It catalyses the reaction (2E,6E)-farnesyl diphosphate = (E,R)-alpha-bisabolene + diphosphate. It participates in terpene metabolism; oleoresin biosynthesis. Its function is as follows. Converts farnesyl diphosphate to alpha-bisabolene. Involved in defensive oleoresin formation in conifers in response to insect attack or other injury. Involved in sesquiterpene (C15) olefins biosynthesis. The polypeptide is Alpha-bisabolene synthase (ag1) (Abies grandis (Grand fir)).